The primary structure comprises 237 residues: Proteasome subunit alpha type-5 (237 aa).

Belongs to the peptidase T1A family. As to quaternary structure, the 26S proteasome consists of a 20S proteasome core and two 19S regulatory subunits. The 20S proteasome core is composed of 28 subunits that are arranged in four stacked rings, resulting in a barrel-shaped structure. The two end rings are each formed by seven alpha subunits, and the two central rings are each formed by seven beta subunits. The catalytic chamber with the active sites is on the inside of the barrel.

The protein resides in the cytoplasm. Its subcellular location is the nucleus. In terms of biological role, the proteasome is a multicatalytic proteinase complex which is characterized by its ability to cleave peptides with Arg, Phe, Tyr, Leu, and Glu adjacent to the leaving group at neutral or slightly basic pH. The proteasome has an ATP-dependent proteolytic activity. This Oryza sativa subsp. japonica (Rice) protein is Proteasome subunit alpha type-5 (PAE1).